Consider the following 434-residue polypeptide: ATP-dependent protease ATPase subunit HslU (434 aa).

Residues Ile18, 60–65, Asp247, Glu312, and Arg384 contribute to the ATP site; that span reads GVGKTE.

The protein belongs to the ClpX chaperone family. HslU subfamily. As to quaternary structure, a double ring-shaped homohexamer of HslV is capped on each side by a ring-shaped HslU homohexamer. The assembly of the HslU/HslV complex is dependent on binding of ATP.

It localises to the cytoplasm. ATPase subunit of a proteasome-like degradation complex; this subunit has chaperone activity. The binding of ATP and its subsequent hydrolysis by HslU are essential for unfolding of protein substrates subsequently hydrolyzed by HslV. HslU recognizes the N-terminal part of its protein substrates and unfolds these before they are guided to HslV for hydrolysis. The chain is ATP-dependent protease ATPase subunit HslU from Brucella ovis (strain ATCC 25840 / 63/290 / NCTC 10512).